A 603-amino-acid chain; its full sequence is Myotubularin (603 aa).

Residues 1-13 are compositionally biased toward polar residues; that stretch reads MASASTSKYNSHS. A disordered region spans residues 1-25; that stretch reads MASASTSKYNSHSLENESIKRTSRD. A phosphoserine mark is found at serine 13 and serine 18. Positions 14–25 are enriched in basic and acidic residues; sequence LENESIKRTSRD. Residues 29 to 97 form the GRAM domain; the sequence is RDLTEAVPRL…GVISRIEKMG (69 aa). Residues 163-538 form the Myotubularin phosphatase domain; that stretch reads GWTVYNPVEE…RHLELWVNYY (376 aa). Asparagine 288, asparagine 313, and isoleucine 314 together coordinate a 1,2-diacyl-sn-glycero-3-phospho-(1D-myo-inositol-3,5-bisphosphate). Asparagine 288, asparagine 313, and isoleucine 314 together coordinate a 1,2-diacyl-sn-glycero-3-phospho-(1D-myo-inositol-3-phosphate). Residue cysteine 375 is the Phosphocysteine intermediate of the active site. 8 residues coordinate a 1,2-diacyl-sn-glycero-3-phospho-(1D-myo-inositol-3,5-bisphosphate): serine 376, aspartate 377, glycine 378, tryptophan 379, aspartate 380, arginine 381, lysine 417, and arginine 421. Positions 376, 377, 378, 379, 380, and 381 each coordinate a 1,2-diacyl-sn-glycero-3-phospho-(1D-myo-inositol-3-phosphate). Arginine 421 serves as a coordination point for a 1,2-diacyl-sn-glycero-3-phospho-(1D-myo-inositol-3-phosphate). Residue threonine 495 is modified to Phosphothreonine. The segment at 579 to 603 is disordered; that stretch reads SAKLSDPPTSPSSPSQMMPHVQTHF. Position 588 is a phosphoserine (serine 588).

Belongs to the protein-tyrosine phosphatase family. Non-receptor class myotubularin subfamily. As to quaternary structure, heterodimer with MTMR12. Interacts with KMT2A/MLL1 (via SET domain). Interacts with DES in skeletal muscle but not in cardiac muscle. Interacts with SPEG.

It localises to the cytoplasm. It is found in the cell membrane. The protein localises to the cell projection. Its subcellular location is the filopodium. The protein resides in the ruffle. It localises to the late endosome. It is found in the myofibril. The protein localises to the sarcomere. It carries out the reaction a 1,2-diacyl-sn-glycero-3-phospho-(1D-myo-inositol-3-phosphate) + H2O = a 1,2-diacyl-sn-glycero-3-phospho-(1D-myo-inositol) + phosphate. The enzyme catalyses a 1,2-diacyl-sn-glycero-3-phospho-(1D-myo-inositol-3,5-bisphosphate) + H2O = a 1,2-diacyl-sn-glycero-3-phospho-(1D-myo-inositol-5-phosphate) + phosphate. The catalysed reaction is 1,2-dioctanoyl-sn-glycero-3-phospho-(1-D-myo-inositol-3-phosphate) + H2O = 1,2-dioctanoyl-sn-glycero-3-phospho-(1D-myo-inositol) + phosphate. It catalyses the reaction 1,2-dioctanoyl-sn-glycero-3-phospho-(1D-myo-inositol-3,5-bisphosphate) + H2O = 1,2-dioctanoyl-sn-glycero-3-phospho-(1D-myo-inositol-5-phosphate) + phosphate. It carries out the reaction 1,2-dihexadecanoyl-sn-glycero-3-phospho-(1D-myo-inositol-3,5-phosphate) + H2O = 1,2-dihexadecanoyl-sn-glycero-3-phospho-(1D-myo-inositol-5-phosphate) + phosphate. Its activity is regulated as follows. Allosterically activated by phosphatidylinositol 5-phosphate (PI5P). Lipid phosphatase which dephosphorylates phosphatidylinositol 3-monophosphate (PI3P) and phosphatidylinositol 3,5-bisphosphate (PI(3,5)P2). Has also been shown to dephosphorylate phosphotyrosine- and phosphoserine-containing peptides. Negatively regulates EGFR degradation through regulation of EGFR trafficking from the late endosome to the lysosome. Plays a role in vacuolar formation and morphology. Regulates desmin intermediate filament assembly and architecture. Plays a role in mitochondrial morphology and positioning. Required for skeletal muscle maintenance but not for myogenesis. In skeletal muscles, stabilizes MTMR12 protein levels. This Homo sapiens (Human) protein is Myotubularin.